The primary structure comprises 201 residues: Alpha-1-acid glycoprotein 1 (201 aa).

Positions 1–18 are cleaved as a signal peptide; it reads MALSWVLTVLSLLPLLEA. Glutamine 19 carries the post-translational modification Pyrrolidone carboxylic acid. 2 cysteine pairs are disulfide-bonded: cysteine 23–cysteine 165 and cysteine 90–cysteine 183. N-linked (GlcNAc...) (complex) asparagine glycosylation is present at asparagine 33. Residue asparagine 56 is glycosylated (N-linked (GlcNAc...) asparagine). Residue asparagine 72 is glycosylated (N-linked (GlcNAc...) (complex) asparagine). 2 N-linked (GlcNAc...) asparagine glycosylation sites follow: asparagine 93 and asparagine 103.

Belongs to the calycin superfamily. Lipocalin family. N-glycosylated. N-glycan heterogeneity at Asn-33: Hex5HexNAc4 (minor), Hex6HexNAc5 (major) and dHex1Hex6HexNAc5 (minor). In terms of tissue distribution, expressed by the liver and secreted in plasma.

Its subcellular location is the secreted. Functionally, functions as a transport protein in the blood stream. Binds various ligands in the interior of its beta-barrel domain. Also binds synthetic drugs and influences their distribution and availability in the body. Appears to function in modulating the activity of the immune system during the acute-phase reaction. The protein is Alpha-1-acid glycoprotein 1 (ORM1) of Homo sapiens (Human).